The sequence spans 382 residues: Pyrimidine monooxygenase RutA (382 aa).

Residues 68-69, N134, E143, 159-160, and S209 each bind FMN; these read IK and RY.

The protein belongs to the NtaA/SnaA/DszA monooxygenase family. RutA subfamily.

The catalysed reaction is uracil + FMNH2 + NADH + O2 = (Z)-3-ureidoacrylate + FMN + NAD(+) + H2O + H(+). The enzyme catalyses thymine + FMNH2 + NADH + O2 = (Z)-2-methylureidoacrylate + FMN + NAD(+) + H2O + H(+). In terms of biological role, catalyzes the pyrimidine ring opening between N-3 and C-4 by an unusual flavin hydroperoxide-catalyzed mechanism, adding oxygen atoms in the process to yield ureidoacrylate peracid, that immediately reacts with FMN forming ureidoacrylate and FMN-N(5)-oxide. The FMN-N(5)-oxide reacts spontaneously with NADH to produce FMN. Requires the flavin reductase RutF to regenerate FMN in vivo. The sequence is that of Pyrimidine monooxygenase RutA from Escherichia coli O150:H5 (strain SE15).